The sequence spans 172 residues: uncharacterized protein (172 aa).

4 helical membrane passes run 46-66 (MFSI…FLYP), 76-96 (LLSL…VGLF), 104-124 (WKFL…LGWS), and 129-149 (FFYA…FTEI).

The protein resides in the endoplasmic reticulum membrane. This is an uncharacterized protein from Schizosaccharomyces pombe (strain 972 / ATCC 24843) (Fission yeast).